A 384-amino-acid chain; its full sequence is MAAARVPLWAICVRRVALATVYFQEEFLDGERWRNRWVHSTNDSQFGHFRLSSGNFYGHKEKDKGLQTTQNSRFYAISARFKPFSNKGKTLIIQYTVKHEQKMDCGGGYIKLFPADVDQKNLNGKSQYYIMFGPDICGFDIKTVHVILHFKNQYHANKKSIRCKVDSFTHLYTLVLRPDLTYEVKIDGQSIESGSIEYDWQLTSLKKMEKASAEAEGWDQAAKDKSQDWEKHFLDASASKPSDWKGELDGDWQAAMLQKPPYQDGLKPEGIDKDVWLHQKMKNSYLTEYDLSEFENIGAVGLELWQVRSGTIFDNFLITDDEEYAENFGKATWGETKGPEKEMDAIQAKEEVKKAQEEDEDDMLMGRFRGRENSFKGFHRRNEF.

Positions 1 to 19 are cleaved as a signal peptide; sequence MAAARVPLWAICVRRVALA. The interval 20-197 is N-domain; it reads TVYFQEEFLD…GQSIESGSIE (178 aa). An N-linked (GlcNAc...) asparagine glycan is attached at N42. C105 and C137 are joined by a disulfide. An alpha-D-glucoside is bound by residues Y109, K111, Y128, and D135. A run of 7 repeats spans residues 191–202, 209–220, 222–231, 235–246, 250–260, 264–272, and 274–284. The tract at residues 191–246 is 4 X approximate repeats; sequence IESGSIEYDWQLTSLKKMEKASAEAEGWDQAAKDKSQDWEKHFLDASASKPSDWKG. A P-domain region spans residues 198–294; the sequence is YDWQLTSLKK…YLTEYDLSEF (97 aa). Residues 250–284 form a 3 X approximate repeats region; it reads GDWQAAMLQKPPYQDGLKPEGIDKDVWLHQKMKNS. The segment at 295–384 is C-domain; it reads ENIGAVGLEL…FKGFHRRNEF (90 aa). An alpha-D-glucoside is bound at residue E303. Positions 381 to 384 match the Prevents secretion from ER motif; sequence RNEF.

Belongs to the calreticulin family. Component of an EIF2 complex at least composed of CELF1/CUGBP1, CALR, CALR3, EIF2S1, EIF2S2, HSP90B1 and HSPA5.

The protein localises to the endoplasmic reticulum lumen. Its function is as follows. During spermatogenesis, may act as a lectin-independent chaperone for specific client proteins such as ADAM3. CALR3 capacity for calcium-binding may be absent or much lower than that of CALR. Required for sperm fertility. In Bos taurus (Bovine), this protein is Calreticulin-3 (CALR3).